The following is a 390-amino-acid chain: Protein arginine N-methyltransferase 7 (390 aa).

Over residues 1–11 (MPPKQHRHQKK) the composition is skewed to basic residues. The segment at 1 to 20 (MPPKQHRHQKKDKNDNALQN) is disordered. Residues 55 to 372 (ARLRHTPVSL…SGDRVILHMQ (318 aa)) form the SAM-dependent MTase PRMT-type domain. Active-site residues include Glu-172 and Glu-181.

The protein belongs to the class I-like SAM-binding methyltransferase superfamily. Protein arginine N-methyltransferase family. PRMT7 subfamily. In terms of assembly, present in large multiprotein complexes.

The protein resides in the cytoplasm. In terms of biological role, arginine methyltransferase that specifically catalyzes the formation of omega-N monomethylarginine (MMA). Has activity toward multiple substrates in vitro. Able to mediate the arginine methylation of histones and myelin basic protein (MBP) in vitro; the relevance of such results is however unclear in vivo. The chain is Protein arginine N-methyltransferase 7 (PRMT7) from Trypanosoma brucei brucei (strain 927/4 GUTat10.1).